The following is a 538-amino-acid chain: Putative cysteine ligase BshC (538 aa).

Residues 460–484 (KINEQIELLERMLKRNVEKKHEVEL) adopt a coiled-coil conformation.

It belongs to the BshC family.

Involved in bacillithiol (BSH) biosynthesis. May catalyze the last step of the pathway, the addition of cysteine to glucosamine malate (GlcN-Mal) to generate BSH. This is Putative cysteine ligase BshC from Bacillus thuringiensis (strain Al Hakam).